The following is a 165-amino-acid chain: Putative L,D-transpeptidase YkuD (165 aa).

One can recognise a LysM domain in the interval 2–46; it reads LMYQVKPGETLESIAADFRTTRQALLQANPGLNGGQVSAGQSIII. Residues 57–164 enclose the L,D-TPase catalytic domain; the sequence is YRIAVSLNGR…VPNGTRVSIT (108 aa). His124 functions as the Proton donor/acceptor in the catalytic mechanism. The active-site Nucleophile is Cys140.

This sequence belongs to the YkuD family. In terms of assembly, monomer.

It is found in the spore wall. It functions in the pathway cell wall biogenesis; peptidoglycan biosynthesis. Functionally, probable enzyme that may play an important role in cell wall biology. The chain is Putative L,D-transpeptidase YkuD from Bacillus licheniformis (strain ATCC 14580 / DSM 13 / JCM 2505 / CCUG 7422 / NBRC 12200 / NCIMB 9375 / NCTC 10341 / NRRL NRS-1264 / Gibson 46).